Consider the following 342-residue polypeptide: GTPase Obg (342 aa).

Residues methionine 1–leucine 159 enclose the Obg domain. The OBG-type G domain maps to alanine 160–lysine 332. Residues glycine 166 to serine 173, phenylalanine 191 to threonine 195, aspartate 214 to glycine 217, asparagine 284 to aspartate 287, and serine 313 to alanine 315 each bind GTP. Mg(2+) is bound by residues serine 173 and threonine 193.

It belongs to the TRAFAC class OBG-HflX-like GTPase superfamily. OBG GTPase family. As to quaternary structure, monomer. Requires Mg(2+) as cofactor.

It is found in the cytoplasm. Functionally, an essential GTPase which binds GTP, GDP and possibly (p)ppGpp with moderate affinity, with high nucleotide exchange rates and a fairly low GTP hydrolysis rate. Plays a role in control of the cell cycle, stress response, ribosome biogenesis and in those bacteria that undergo differentiation, in morphogenesis control. This Syntrophus aciditrophicus (strain SB) protein is GTPase Obg.